Consider the following 163-residue polypeptide: Cyclic pyranopterin monophosphate synthase (163 aa).

Substrate-binding positions include 75–77 (LCH) and 113–114 (ME). D128 is a catalytic residue.

The protein belongs to the MoaC family. In terms of assembly, homohexamer; trimer of dimers.

The enzyme catalyses (8S)-3',8-cyclo-7,8-dihydroguanosine 5'-triphosphate = cyclic pyranopterin phosphate + diphosphate. Its pathway is cofactor biosynthesis; molybdopterin biosynthesis. Functionally, catalyzes the conversion of (8S)-3',8-cyclo-7,8-dihydroguanosine 5'-triphosphate to cyclic pyranopterin monophosphate (cPMP). The chain is Cyclic pyranopterin monophosphate synthase from Jannaschia sp. (strain CCS1).